The primary structure comprises 91 residues: Small ribosomal subunit protein uS19 (91 aa).

This sequence belongs to the universal ribosomal protein uS19 family.

In terms of biological role, protein S19 forms a complex with S13 that binds strongly to the 16S ribosomal RNA. This is Small ribosomal subunit protein uS19 from Sulfurimonas denitrificans (strain ATCC 33889 / DSM 1251) (Thiomicrospira denitrificans (strain ATCC 33889 / DSM 1251)).